The sequence spans 390 residues: Neuromedin-B receptor (390 aa).

Topologically, residues 1–41 are extracellular; it reads MPPRSLSNLSFPTEANESELVPEVWEKDFLPDSDGTTAELV. Residues asparagine 8 and asparagine 16 are each glycosylated (N-linked (GlcNAc...) asparagine). A helical membrane pass occupies residues 42-65; sequence IRCVIPSLYLIIISVGLLGNIMLV. The Cytoplasmic portion of the chain corresponds to 66-79; that stretch reads KIFLTNSAMRNVPN. A helical membrane pass occupies residues 80–99; the sequence is IFISNLAAGDLLLLLTCVPV. Residues 100-117 lie on the Extracellular side of the membrane; it reads DASRYFFDEWVFGKLGCK. A disulfide bond links cysteine 116 and cysteine 198. Residues 118–139 traverse the membrane as a helical segment; sequence LIPAIQLTSVGVSVFTLTALSA. Residues 140-156 are Cytoplasmic-facing; the sequence is DRYRAIVNPMDMQTSGV. Residues 157-177 form a helical membrane-spanning segment; sequence LLWTSLKAVGIWVVSVLLAVP. Residues 178 to 211 lie on the Extracellular side of the membrane; the sequence is EAVFSEVARIGSLDNSSFTACIPYPQTDELHPKI. N-linked (GlcNAc...) asparagine glycosylation occurs at asparagine 192. The helical transmembrane segment at 212–235 threads the bilayer; sequence HSVLIFLVYFLIPLVIISIYYYHI. Topologically, residues 236 to 266 are cytoplasmic; that stretch reads AKTLIKSAHNLPGEYNEHTKKQMETRKRLAK. The chain crosses the membrane as a helical span at residues 267–287; sequence IVLVFVGCFVFCWFPNHVLYL. The Extracellular portion of the chain corresponds to 288–299; that stretch reads YRSFNYKEIDPS. Residues 300 to 327 form a helical membrane-spanning segment; the sequence is LGHMIVTLVARVLSFSNSCVNPFALYLL. The Cytoplasmic portion of the chain corresponds to 328 to 390; that stretch reads SESFRKHFNS…GHSTKQEIAL (63 aa). Cysteine 341 is lipidated: S-palmitoyl cysteine. Serine 352 is subject to Phosphoserine.

This sequence belongs to the G-protein coupled receptor 1 family. In terms of tissue distribution, expressed in a subset of neurons of the pre-Botzinger complex. Within the pre-Botzinger complex, there is some overlap with neurons expressing Grpr with some cells expressing only Grpr or Nmbr while some cells express both. Expressed in dorsal root ganglion neurons and mast cells. Expressed in lung.

It is found in the cell membrane. In terms of biological role, receptor for neuromedin-B. Contributes to the maintenance of basal sigh rate through signaling in the pre-Botzinger complex, a cluster of several thousand neurons in the ventrolateral medulla responsible for inspiration during respiratory activity. Contributes to the induction of sneezing following exposure to chemical irritants or allergens which causes release of NMB by nasal sensory neurons and activation of NMBR-expressing neurons in the sneeze-evoking region of the brainstem. These in turn activate neurons of the caudal ventral respiratory group, giving rise to the sneezing response. Contributes to induction of acute itch, possibly through its activation on dorsal root ganglion neurons by the NMB peptide. Plays a role in the innate immune response to influenza A virus infection by enhancing interferon alpha expression and reducing expression of IL6. Plays a role in CSF1-induced proliferation of osteoclast precursors by contributing to the positive regulation of the expression of the CSF1 receptor CSF1R. This chain is Neuromedin-B receptor (Nmbr), found in Mus musculus (Mouse).